The following is a 233-amino-acid chain: Modulator of macroautophagy TMEM150B (233 aa).

At 1-7 the chain is on the cytoplasmic side; the sequence is MWGYLSL. The chain crosses the membrane as a helical span at residues 8-28; the sequence is MPVFLAVWAISGVWIVFAIAV. Topologically, residues 29 to 51 are extracellular; the sequence is TNRTVDLSKGFPYISICGSFPPQ. The N-linked (GlcNAc...) asparagine glycan is linked to asparagine 30. Residues 52-72 form a helical membrane-spanning segment; the sequence is SCIFSQVLNMGAALAAWICIV. Residues 73 to 84 lie on the Cytoplasmic side of the membrane; it reads RYHQLRDWGVRR. A helical transmembrane segment spans residues 85–105; sequence WPNQLILWTGLLCALGTSVVG. At 106-116 the chain is on the extracellular side; that stretch reads NFQEKNQRPTH. Residues 117–137 form a helical membrane-spanning segment; the sequence is LAGAFLAFILGNVYFWLQLLL. Topologically, residues 138–155 are cytoplasmic; the sequence is WRLKRLPQPGAAWIGPLR. A helical transmembrane segment spans residues 156-176; it reads LGLCSVCTILIVAMIVLHACS. The Extracellular portion of the chain corresponds to 177–185; that stretch reads LRSVSAACE. A helical membrane pass occupies residues 186-206; sequence WVVAMLLFALFGLLAVDFSAL. Topologically, residues 207–233 are cytoplasmic; the sequence is ESCTLCVQPWPSLSPPPASPISLPVQL.

Belongs to the DRAM/TMEM150 family. Highly expressed in the colon and lung with comparatively high levels also detectable in the lymph nodes, placenta, duodenum, peripheral blood mononuclear cells and spleen.

It is found in the cell membrane. The protein localises to the endosome membrane. It localises to the cytoplasmic vesicle. Its subcellular location is the autophagosome membrane. Its function is as follows. Modulator of macroautophagy that causes accumulation of autophagosomes under basal conditions and enhances autophagic flux. Represses cell death and promotes long-term clonogenic survival of cells grown in the absence of glucose in a macroautophagy-independent manner. May have some role in extracellular matrix engulfment or growth factor receptor recycling, both of which can modulate cell survival. This is Modulator of macroautophagy TMEM150B from Homo sapiens (Human).